Here is a 528-residue protein sequence, read N- to C-terminus: Peptide chain release factor 3 (528 aa).

Positions 10–279 (AKRRTFAIIS…GLVEWAPAPM (270 aa)) constitute a tr-type G domain. GTP-binding positions include 19–26 (SHPDAGKT), 87–91 (DTPGH), and 141–144 (NKLD).

The protein belongs to the TRAFAC class translation factor GTPase superfamily. Classic translation factor GTPase family. PrfC subfamily.

Its subcellular location is the cytoplasm. In terms of biological role, increases the formation of ribosomal termination complexes and stimulates activities of RF-1 and RF-2. It binds guanine nucleotides and has strong preference for UGA stop codons. It may interact directly with the ribosome. The stimulation of RF-1 and RF-2 is significantly reduced by GTP and GDP, but not by GMP. This chain is Peptide chain release factor 3, found in Escherichia coli O1:K1 / APEC.